The chain runs to 70 residues: Turripeptide Lol9.1 (70 aa).

A signal peptide spans 1 to 20; the sequence is MKVYCLLLVLLVGLVSQAHG. In terms of domain architecture, Kazal-like spans 21 to 70; sequence KPTKRCLSVCSAEYEPVCGSDGKTYANKCHLMTEACWSPTSITLVHEGKC. 3 disulfides stabilise this stretch: Cys26/Cys56, Cys30/Cys49, and Cys38/Cys70.

It belongs to the conopeptide P-like superfamily. As to expression, expressed by the venom duct.

The protein resides in the secreted. Acts as a neurotoxin by inhibiting an ion channel. May also act as a serine protease inhibitor, since it possess the kazal serine protease inhibitor signature. The protein is Turripeptide Lol9.1 of Iotyrris olangoensis (Sea snail).